The sequence spans 364 residues: 3-isopropylmalate dehydrogenase (364 aa).

Position 78-91 (78-91) interacts with NAD(+); it reads GKKWDYLSIDKRPE. Residues R99, R109, R138, and D227 each contribute to the substrate site. Positions 227, 251, and 255 each coordinate Mg(2+). Residue 285-297 coordinates NAD(+); it reads GSAPDIAGKNIAN.

This sequence belongs to the isocitrate and isopropylmalate dehydrogenases family. LeuB type 1 subfamily. In terms of assembly, homodimer. The cofactor is Mg(2+). Requires Mn(2+) as cofactor.

It localises to the cytoplasm. It carries out the reaction (2R,3S)-3-isopropylmalate + NAD(+) = 4-methyl-2-oxopentanoate + CO2 + NADH. It participates in amino-acid biosynthesis; L-leucine biosynthesis; L-leucine from 3-methyl-2-oxobutanoate: step 3/4. In terms of biological role, catalyzes the oxidation of 3-carboxy-2-hydroxy-4-methylpentanoate (3-isopropylmalate) to 3-carboxy-4-methyl-2-oxopentanoate. The product decarboxylates to 4-methyl-2 oxopentanoate. This is 3-isopropylmalate dehydrogenase from Buchnera aphidicola subsp. Uroleucon erigeronensis.